A 605-amino-acid polypeptide reads, in one-letter code: Elongation factor 4 (605 aa).

Residues 9–191 (DTIRNFCIIA…AIIKRVPAPV (183 aa)) enclose the tr-type G domain. GTP contacts are provided by residues 21 to 26 (DHGKST) and 138 to 141 (NKID).

It belongs to the TRAFAC class translation factor GTPase superfamily. Classic translation factor GTPase family. LepA subfamily.

It localises to the cell inner membrane. The catalysed reaction is GTP + H2O = GDP + phosphate + H(+). Functionally, required for accurate and efficient protein synthesis under certain stress conditions. May act as a fidelity factor of the translation reaction, by catalyzing a one-codon backward translocation of tRNAs on improperly translocated ribosomes. Back-translocation proceeds from a post-translocation (POST) complex to a pre-translocation (PRE) complex, thus giving elongation factor G a second chance to translocate the tRNAs correctly. Binds to ribosomes in a GTP-dependent manner. The polypeptide is Elongation factor 4 (Chlorobium phaeobacteroides (strain BS1)).